The primary structure comprises 108 residues: DNA-binding protein HBbu (108 aa).

The protein belongs to the bacterial histone-like protein family.

In terms of biological role, histone-like DNA-binding protein which is capable of wrapping DNA to stabilize it, and thus to prevent its denaturation under extreme environmental conditions. The sequence is that of DNA-binding protein HBbu (hbb) from Borrelia andersonii (Borreliella andersonii).